The sequence spans 140 residues: Nucleoside diphosphate kinase (140 aa).

The ATP site is built by K11, F59, R87, T93, R104, and N114. H117 (pros-phosphohistidine intermediate) is an active-site residue.

This sequence belongs to the NDK family. As to quaternary structure, homotetramer. Mg(2+) serves as cofactor.

The protein resides in the cytoplasm. It catalyses the reaction a 2'-deoxyribonucleoside 5'-diphosphate + ATP = a 2'-deoxyribonucleoside 5'-triphosphate + ADP. The enzyme catalyses a ribonucleoside 5'-diphosphate + ATP = a ribonucleoside 5'-triphosphate + ADP. Its function is as follows. Major role in the synthesis of nucleoside triphosphates other than ATP. The ATP gamma phosphate is transferred to the NDP beta phosphate via a ping-pong mechanism, using a phosphorylated active-site intermediate. The polypeptide is Nucleoside diphosphate kinase (Hyphomonas neptunium (strain ATCC 15444)).